Consider the following 446-residue polypeptide: uncharacterized protein (446 aa).

A run of 12 helical transmembrane segments spans residues 20–40 (LIGVGCTIGTGFFLGSSIAIV), 42–62 (SGFSVLLSFLIAGIGTYFVFE), 95–115 (WVYWTSEMLITGSQLTAISLF), 127–147 (VFASIYAVLGLLIIFTGLSVF), 160–180 (AAIFMFIVIAILALCGILSGG), 205–225 (LIYAFYAFGGIEVMGLMAVHL), 237–257 (LMLATLAIIYIISIGLALLLV), 284–304 (IFNGIFIIAGFSTLVASLFAV), 331–351 (WPALGLTFAGLVLSIILSLVL), 355–375 (IYEHMTTAAGLMLLYTWLFIL), 388–408 (GKTQIYLAMVLIAAAVSGTLF), and 414–434 (PGFFVSIGFLVIIAIVTMIYQ).

This sequence belongs to the amino acid-polyamine-organocation (APC) superfamily.

The protein localises to the cell membrane. This is an uncharacterized protein from Bacillus subtilis (strain 168).